The sequence spans 154 residues: 17 kDa surface antigen (154 aa).

The signal sequence occupies residues 1–19; the sequence is MKLLSKIMIIALAASTLQA. Cys20 is lipidated: N-palmitoyl cysteine. Cys20 is lipidated: S-diacylglycerol cysteine.

This sequence belongs to the rickettsiale 17 kDa surface antigen family.

The protein localises to the cell outer membrane. This is 17 kDa surface antigen (omp) from Rickettsia amblyommatis (Rickettsia amblyommii).